We begin with the raw amino-acid sequence, 193 residues long: Chaperone protein TorD (193 aa).

This sequence belongs to the TorD/DmsD family. TorD subfamily.

Its subcellular location is the cytoplasm. Functionally, involved in the biogenesis of TorA. Acts on TorA before the insertion of the molybdenum cofactor and, as a result, probably favors a conformation of the apoenzyme that is competent for acquiring the cofactor. The sequence is that of Chaperone protein TorD from Actinobacillus succinogenes (strain ATCC 55618 / DSM 22257 / CCUG 43843 / 130Z).